A 59-amino-acid chain; its full sequence is ATP synthase protein 8 (59 aa).

Residues Leu7–Glu23 form a helical membrane-spanning segment.

The protein belongs to the ATPase protein 8 family. F-type ATPases have 2 components, CF(1) - the catalytic core - and CF(0) - the membrane proton channel.

It localises to the mitochondrion membrane. Functionally, mitochondrial membrane ATP synthase (F(1)F(0) ATP synthase or Complex V) produces ATP from ADP in the presence of a proton gradient across the membrane which is generated by electron transport complexes of the respiratory chain. F-type ATPases consist of two structural domains, F(1) - containing the extramembraneous catalytic core and F(0) - containing the membrane proton channel, linked together by a central stalk and a peripheral stalk. During catalysis, ATP synthesis in the catalytic domain of F(1) is coupled via a rotary mechanism of the central stalk subunits to proton translocation. Part of the complex F(0) domain. Minor subunit located with subunit a in the membrane. In Oenothera berteroana (Bertero's evening primrose), this protein is ATP synthase protein 8 (MT-ATP8).